Here is a 437-residue protein sequence, read N- to C-terminus: Protein RecA (437 aa).

69 to 76 (GPESSGKT) provides a ligand contact to ATP. The segment at 343–437 (HDAAVRTSPD…GNGKSVKRKG (95 aa)) is disordered. Composition is skewed to polar residues over residues 350–371 (SPDTNSRKVSGTGAVHTTSGSP), 380–391 (GAVNNSRDSTGG), and 400–426 (LNLSVNRDVSTDTVSSKISDATHNQKP).

Belongs to the RecA family.

The protein localises to the cytoplasm. In terms of biological role, can catalyze the hydrolysis of ATP in the presence of single-stranded DNA, the ATP-dependent uptake of single-stranded DNA by duplex DNA, and the ATP-dependent hybridization of homologous single-stranded DNAs. It interacts with LexA causing its activation and leading to its autocatalytic cleavage. The chain is Protein RecA from Tropheryma whipplei (strain Twist) (Whipple's bacillus).